The primary structure comprises 527 residues: Putative adhesin P1-like protein MPN_500 (527 aa).

Disordered regions lie at residues 1–26, 76–148, 248–269, and 468–527; these read MDDI…GSRS, GWRN…LTNY, ASGS…PEQS, and FGTD…VSGH. Residues 9–26 are compositionally biased toward low complexity; it reads TSAGSSSGTSTNTSGSRS. Positions 82–95 are enriched in polar residues; the sequence is TTSGSTGNANDTKF. Positions 108 to 117 are enriched in low complexity; the sequence is SSGTNTSAGN. Positions 128–148 are enriched in polar residues; sequence QNGQVKTSVQEATSGDNLTNY. Residues 248–262 show a composition bias toward low complexity; it reads ASGSGSNTTSSPGIG. A compositionally biased stretch (polar residues) spans 468 to 495; the sequence is FGTDHSTQPQPQSLKTTTPVFGRSSGNL. Gly residues predominate over residues 500 to 513; sequence SGGGAGGGSSGSGQ.

The protein belongs to the adhesin P1 family.

In Mycoplasma pneumoniae (strain ATCC 29342 / M129 / Subtype 1) (Mycoplasmoides pneumoniae), this protein is Putative adhesin P1-like protein MPN_500.